Here is a 360-residue protein sequence, read N- to C-terminus: Histidinol-phosphate aminotransferase (360 aa).

The residue at position 218 (lysine 218) is an N6-(pyridoxal phosphate)lysine.

It belongs to the class-II pyridoxal-phosphate-dependent aminotransferase family. Histidinol-phosphate aminotransferase subfamily. Homodimer. Pyridoxal 5'-phosphate serves as cofactor.

It carries out the reaction L-histidinol phosphate + 2-oxoglutarate = 3-(imidazol-4-yl)-2-oxopropyl phosphate + L-glutamate. It participates in amino-acid biosynthesis; L-histidine biosynthesis; L-histidine from 5-phospho-alpha-D-ribose 1-diphosphate: step 7/9. This Pelagibacter ubique (strain HTCC1062) protein is Histidinol-phosphate aminotransferase.